Reading from the N-terminus, the 136-residue chain is Ribosome-binding factor A (136 aa).

It belongs to the RbfA family. As to quaternary structure, monomer. Binds 30S ribosomal subunits, but not 50S ribosomal subunits or 70S ribosomes.

The protein localises to the cytoplasm. One of several proteins that assist in the late maturation steps of the functional core of the 30S ribosomal subunit. Associates with free 30S ribosomal subunits (but not with 30S subunits that are part of 70S ribosomes or polysomes). Required for efficient processing of 16S rRNA. May interact with the 5'-terminal helix region of 16S rRNA. This chain is Ribosome-binding factor A, found in Cellvibrio japonicus (strain Ueda107) (Pseudomonas fluorescens subsp. cellulosa).